Reading from the N-terminus, the 701-residue chain is MARKTPIVRYRNIGICAHVDAGKTTTTERVLFYTGLSHKIGEVHDGAATMDWMEQEQERGITITSAATTCFWSGMQQQFPQHRINIIDTPGHVDFTIEVERSLRVLDGAVVVLCGSSGVQPQTETVWRQANKYEVPRLVFVNKMDRAGANFRSVVQQLRDRLGANAVPLHMTIGAEDGFEGVIDLIKMKSIHWNEADMGMTFEYGEVPEDLLEECEEMREYAVEAAAEANDDLMEKYLETGELSEDEIKAGLRARTLANEIVPVLGGSAFKNKGVQAVLDAVVEYLPAPTEVKAIEGTLIDGETVDTRVADDDAPFAALAFKIATDPFVGTLTFFRVYSGRLESGTAVYNSVKQKRERVGRMVQMHSNNREEIKEVLAGDIAAAIGLKDVTTGDTLCAESNKIVLERMEFPEPVISVAVEPRTVPDQEKMAVALAKLAQEDPSFRVATDEETGQTIISGMGELHLDIIVDRMRREFGVDANIGKPQVAYRERITRTCEVEGKFVRQSGGRGQYGHVWIRFEPADDNNAEGLVFENEVVGGAVPKEYIPAVEKGISEQMRNGVLAGYPLLGLKATIYDGSFHDVDSNEMAFKIAASIATKNLAAEGGAVLLEPVMKVEVVTPEENMGDVVGDLNRRRGLIQGMEECISGKVVRAEVPLAEMFGYATDLRSATQGRATFTMEFQQYSEAPKNVADEIMARNGR.

The 283-residue stretch at 8–290 (VRYRNIGICA…AVVEYLPAPT (283 aa)) folds into the tr-type G domain. Residues 17-24 (AHVDAGKT), 88-92 (DTPGH), and 142-145 (NKMD) contribute to the GTP site.

This sequence belongs to the TRAFAC class translation factor GTPase superfamily. Classic translation factor GTPase family. EF-G/EF-2 subfamily.

The protein resides in the cytoplasm. Its function is as follows. Catalyzes the GTP-dependent ribosomal translocation step during translation elongation. During this step, the ribosome changes from the pre-translocational (PRE) to the post-translocational (POST) state as the newly formed A-site-bound peptidyl-tRNA and P-site-bound deacylated tRNA move to the P and E sites, respectively. Catalyzes the coordinated movement of the two tRNA molecules, the mRNA and conformational changes in the ribosome. This Saccharophagus degradans (strain 2-40 / ATCC 43961 / DSM 17024) protein is Elongation factor G 1.